Consider the following 416-residue polypeptide: Squamosa promoter-binding-like protein 8 (416 aa).

Positions 11-51 are disordered; it reads SSCDDFGYNATPPPPPSLLPIMDQDGGGGSIQRDHHQHHNH. Residues 182-260 form an SBP-type zinc finger; the sequence is PPRCQAEGCK…ADHNRRRRKS (79 aa). Zn(2+) contacts are provided by Cys-185, Cys-190, Cys-207, His-210, Cys-227, Cys-230, His-234, and Cys-246. The Bipartite nuclear localization signal motif lies at 243–259; that stretch reads KKSCRKRLADHNRRRRK. Residues 250 to 299 form a disordered region; sequence LADHNRRRRKSKPSDGEHSGEKRRAQANKSAATKDKAGSSSKNAGIGDGF. The segment covering 261-273 has biased composition (basic and acidic residues); the sequence is KPSDGEHSGEKRR.

In terms of tissue distribution, expressed in stems, leaf sheaths, and young panicles. Weakly expressed in ligules, auricles, and leaf sheaths at the basal region.

It localises to the nucleus. Its function is as follows. Probable transcription factor that plays an important role in building the laminar joint between leaf blade and leaf sheath boundary, thereby controlling ligule and auricle development. The polypeptide is Squamosa promoter-binding-like protein 8 (SPL8) (Oryza sativa subsp. japonica (Rice)).